A 214-amino-acid polypeptide reads, in one-letter code: uncharacterized protein (214 aa).

An N-terminal signal peptide occupies residues 1–18; the sequence is MTMYIGLILVVLATFCQG. Asn64 is a glycosylation site (N-linked (GlcNAc...) asparagine; by host).

This is an uncharacterized protein from Magallana gigas (Pacific oyster).